A 103-amino-acid polypeptide reads, in one-letter code: Ubiquitin-related modifier 1 (103 aa).

At Gly-103 the chain carries 1-thioglycine. Gly-103 is covalently cross-linked (Glycyl lysine isopeptide (Gly-Lys) (interchain with K-? in acceptor proteins)).

Belongs to the URM1 family. In terms of processing, C-terminal thiocarboxylation occurs in 2 steps, it is first acyl-adenylated (-COAMP) via the hesA/moeB/thiF part of UBA4, then thiocarboxylated (-COSH) via the rhodanese domain of UBA4.

The protein localises to the cytoplasm. The protein operates within tRNA modification; 5-methoxycarbonylmethyl-2-thiouridine-tRNA biosynthesis. Its function is as follows. Acts as a sulfur carrier required for 2-thiolation of mcm(5)S(2)U at tRNA wobble positions of cytosolic tRNA(Lys), tRNA(Glu) and tRNA(Gln). Serves as sulfur donor in tRNA 2-thiolation reaction by being thiocarboxylated (-COSH) at its C-terminus by the MOCS3 homolog UBA4. The sulfur is then transferred to tRNA to form 2-thiolation of mcm(5)S(2)U. Prior mcm(5) tRNA modification by the elongator complex is required for 2-thiolation. Also acts as a ubiquitin-like protein (UBL) that is covalently conjugated via an isopeptide bond to lysine residues of target proteins such as AHP1. The thiocarboxylated form serves as substrate for conjugation and oxidative stress specifically induces the formation of UBL-protein conjugates. The sequence is that of Ubiquitin-related modifier 1 from Vanderwaltozyma polyspora (strain ATCC 22028 / DSM 70294 / BCRC 21397 / CBS 2163 / NBRC 10782 / NRRL Y-8283 / UCD 57-17) (Kluyveromyces polysporus).